The chain runs to 205 residues: Large ribosomal subunit protein uL3 (205 aa).

Belongs to the universal ribosomal protein uL3 family. In terms of assembly, part of the 50S ribosomal subunit. Forms a cluster with proteins L14 and L19.

Its function is as follows. One of the primary rRNA binding proteins, it binds directly near the 3'-end of the 23S rRNA, where it nucleates assembly of the 50S subunit. The chain is Large ribosomal subunit protein uL3 from Thermosipho africanus (strain TCF52B).